The primary structure comprises 127 residues: Major sperm protein 55/57 (127 aa).

The residue at position 2 (Ala2) is an N-acetylalanine. The MSP domain maps to 9–126; the sequence is DIQTQPGTKI…RRKNLPIEYN (118 aa).

Sperm.

The protein resides in the cell projection. Its subcellular location is the pseudopodium. The protein localises to the cytoplasm. It is found in the cytoskeleton. Central component in molecular interactions underlying sperm crawling. Forms an extensive filament system that extends from sperm villipoda, along the leading edge of the pseudopod. This Caenorhabditis elegans protein is Major sperm protein 55/57 (msp-55).